Reading from the N-terminus, the 590-residue chain is Ankyrin repeat domain-containing protein 13A (590 aa).

2 ANK repeats span residues 40 to 69 and 73 to 102; these read RGRTLLHLAVSLGHLESARVLLRHKADVTK and QGWTVLHEAVSTGDPEMVYTVLQHRDYHNT. The residue at position 205 (Ser-205) is a Phosphoserine. 4 UIM domains span residues 483 to 502, 519 to 538, 549 to 568, and 574 to 590; these read EDYEIMQFAIQQSLLESSRS, TYDAQYERAIQESLLTSTEG, RFDNDLQLAMELSAKELEEW, and EEEAELQQVLQLSLTDK. Ser-586 carries the post-translational modification Phosphoserine.

In terms of assembly, interacts (via the UIM 3 and 4 repeats) with EGFR (ubiquitinated); the interaction is direct, inhibited by ANKRD13A monoubiquitination and may regulate EGFR internalization. Post-translationally, monoubiquitinated, inhibits interaction with ubiquitinated EGFR.

It localises to the cell membrane. Its subcellular location is the late endosome. In terms of biological role, ubiquitin-binding protein that specifically recognizes and binds 'Lys-63'-linked ubiquitin. Does not bind 'Lys-48'-linked ubiquitin. Positively regulates the internalization of ligand-activated EGFR by binding to the Ub moiety of ubiquitinated EGFR at the cell membrane. In Homo sapiens (Human), this protein is Ankyrin repeat domain-containing protein 13A (ANKRD13A).